Reading from the N-terminus, the 305-residue chain is GTPase Era (305 aa).

The Era-type G domain maps to 9-176 (KSGFISIIGR…LDTLPKYLPE (168 aa)). The interval 17–24 (GRPNVGKS) is G1. 17 to 24 (GRPNVGKS) serves as a coordination point for GTP. A G2 region spans residues 43–47 (QTTRN). The G3 stretch occupies residues 64 to 67 (DTPG). Residues 64–68 (DTPGI) and 126–129 (NKID) contribute to the GTP site. The interval 126 to 129 (NKID) is G4. The G5 stretch occupies residues 155 to 157 (ISA). Residues 207–286 (TREEIPHSIA…YLELWVKVQK (80 aa)) form the KH type-2 domain.

This sequence belongs to the TRAFAC class TrmE-Era-EngA-EngB-Septin-like GTPase superfamily. Era GTPase family. As to quaternary structure, monomer.

Its subcellular location is the cytoplasm. It is found in the cell membrane. An essential GTPase that binds both GDP and GTP, with rapid nucleotide exchange. Plays a role in 16S rRNA processing and 30S ribosomal subunit biogenesis and possibly also in cell cycle regulation and energy metabolism. The chain is GTPase Era from Lysinibacillus sphaericus (strain C3-41).